A 247-amino-acid polypeptide reads, in one-letter code: ATP synthase subunit a, chloroplastic (247 aa).

5 consecutive transmembrane segments (helical) span residues 38-58, 95-115, 134-154, 199-219, and 220-240; these read QVLI…AIAV, VPFI…GALL, INTT…AGLT, LVVV…VMFL, and GLFT…AYIG.

The protein belongs to the ATPase A chain family. F-type ATPases have 2 components, CF(1) - the catalytic core - and CF(0) - the membrane proton channel. CF(1) has five subunits: alpha(3), beta(3), gamma(1), delta(1), epsilon(1). CF(0) has four main subunits: a, b, b' and c.

Its subcellular location is the plastid. It localises to the chloroplast thylakoid membrane. Key component of the proton channel; it plays a direct role in the translocation of protons across the membrane. This Illicium oligandrum (Star anise) protein is ATP synthase subunit a, chloroplastic.